The chain runs to 238 residues: Probable transcriptional regulatory protein SERP0322 (238 aa).

Belongs to the TACO1 family. YeeN subfamily.

Its subcellular location is the cytoplasm. This chain is Probable transcriptional regulatory protein SERP0322, found in Staphylococcus epidermidis (strain ATCC 35984 / DSM 28319 / BCRC 17069 / CCUG 31568 / BM 3577 / RP62A).